A 476-amino-acid chain; its full sequence is MKILFVAAEGAPFSKTGGLGDVIGALPKSLVKHGHQVGVILPYYDMTDAKFGDQVEDLFYFEVSVGWRRQYVGVKRLVLNGVSFYFIDNQHYFFRGHVYGDFDDGERFAYFQLAAVELMERIDFIPDVLHVHDYHTAMIPFLVKEKYHWIQAYRNIKTVLTIHNLEFQGQFPDSMLWELFGVGYERYADGTLRWNDCLNWMKAGILYADRVTTVSPSYAGEIRTPEFGCNLDQILRMESGKLVGIVNGIDTEIYNPETDPLLAHHFDKSDLSGKLENKRALQERVGLPVRDDVPLVGIVSRLTRQKGFDLVVEELHNFLQQDVQIILLGTGDPAFEQAFAWFGQAYPDKLSANILFDVGLAQEIYAASDIFLMPSRFEPCGLSQMMAMRYGTLPLVHEVGGLRDTVEPYNVYTGQGTGFSFNNFSGYWLSWTFKEALNLYTHDKEAWKSMQEQAMERDFSWDTASLAYSDLYQSLL.

Lys-15 provides a ligand contact to ADP-alpha-D-glucose.

The protein belongs to the glycosyltransferase 1 family. Bacterial/plant glycogen synthase subfamily.

The enzyme catalyses [(1-&gt;4)-alpha-D-glucosyl](n) + ADP-alpha-D-glucose = [(1-&gt;4)-alpha-D-glucosyl](n+1) + ADP + H(+). Its pathway is glycan biosynthesis; glycogen biosynthesis. In terms of biological role, synthesizes alpha-1,4-glucan chains using ADP-glucose. The sequence is that of Glycogen synthase from Streptococcus gordonii (strain Challis / ATCC 35105 / BCRC 15272 / CH1 / DL1 / V288).